The primary structure comprises 519 residues: Halolysin (519 aa).

Residues 1-27 (MAGTPNFDRRSFLRLAAAAGLTGMAGV) constitute a signal peptide (tat-type signal). Residues 28-116 (TSATPGRSPG…AEKNATHEAL (89 aa)) constitute a propeptide that is removed on maturation. The Peptidase S8 domain maps to 127–400 (QYAPQQVNAD…SGRVDAANAV (274 aa)). Active-site charge relay system residues include Asp154, His193, and Ser347. The segment at 386 to 425 (STKQGSGRVDAANAVTTDPGDGGGGGGGGSKETTYDGTLS) is disordered. A compositionally biased stretch (gly residues) spans 405 to 415 (GDGGGGGGGGS).

Belongs to the peptidase S8 family. Post-translationally, predicted to be exported by the Tat system. The position of the signal peptide cleavage has not been experimentally proven.

Its subcellular location is the secreted. In terms of biological role, probable secreted halophilic serine protease showing proteolytic activity toward the protease general substrate azocasein. The chain is Halolysin (hly) from Haloferax mediterranei (strain ATCC 33500 / DSM 1411 / JCM 8866 / NBRC 14739 / NCIMB 2177 / R-4) (Halobacterium mediterranei).